The sequence spans 782 residues: Protein PAT1 homolog 1 (782 aa).

Disordered stretches follow at residues 96-153 (GPKH…HSKP), 177-217 (LPES…YSAP), 332-372 (VREH…SKHM), and 460-481 (EVDS…GKHL). The segment covering 108–117 (SGSFSRESSS) has biased composition (low complexity). Positions 208 to 217 (GGSQLTYSAP) are enriched in polar residues. Positions 335 to 347 (HKHKSSHRSRKNR) are enriched in basic residues. Residues 348-366 (GLSQQTSDAASQKSETGLQ) are compositionally biased toward polar residues. Basic and acidic residues predominate over residues 471–481 (SGDHKGSGKHL).

In terms of assembly, interacts with AFPH2/NINJA. Expressed in root vasculature, shoot apical meristem (SAM) and leaves.

In terms of biological role, activator of mRNA decapping. Involved in mRNA decay via decapping. Involved in the regulation of root stem cell niche identity. Maintains root stem cell niche stability through the interaction with the negative regulator of jasmonate signaling AFPH2/NINJA, and the regulation of cell division. The protein is Protein PAT1 homolog 1 of Arabidopsis thaliana (Mouse-ear cress).